A 474-amino-acid chain; its full sequence is tRNA-2-methylthio-N(6)-dimethylallyladenosine synthase (474 aa).

The MTTase N-terminal domain occupies 3-120 (KKLHIKTWGC…LPEMINAVRG (118 aa)). [4Fe-4S] cluster-binding residues include Cys12, Cys49, Cys83, Cys157, Cys161, and Cys164. The Radical SAM core domain maps to 143–375 (RADGPTAFVS…QERINQQAMA (233 aa)). Residues 378–441 (RRMLGTVQRI…TNSLRGKIVR (64 aa)) form the TRAM domain.

Belongs to the methylthiotransferase family. MiaB subfamily. Monomer. The cofactor is [4Fe-4S] cluster.

It localises to the cytoplasm. It catalyses the reaction N(6)-dimethylallyladenosine(37) in tRNA + (sulfur carrier)-SH + AH2 + 2 S-adenosyl-L-methionine = 2-methylsulfanyl-N(6)-dimethylallyladenosine(37) in tRNA + (sulfur carrier)-H + 5'-deoxyadenosine + L-methionine + A + S-adenosyl-L-homocysteine + 2 H(+). Its function is as follows. Catalyzes the methylthiolation of N6-(dimethylallyl)adenosine (i(6)A), leading to the formation of 2-methylthio-N6-(dimethylallyl)adenosine (ms(2)i(6)A) at position 37 in tRNAs that read codons beginning with uridine. The polypeptide is tRNA-2-methylthio-N(6)-dimethylallyladenosine synthase (Klebsiella pneumoniae (strain 342)).